The primary structure comprises 42 residues: YKRCHIKGGHCFPKEKLICIPPSSDIGKMDCPWKRKCCKKRS.

3 disulfide bridges follow: cysteine 4/cysteine 37, cysteine 11/cysteine 31, and cysteine 19/cysteine 38.

Belongs to the crotamine-myotoxin family. Monomer. As to expression, expressed by the venom gland.

It is found in the secreted. Functionally, cationic peptide that possesses multiple functions. It acts as a cell-penetrating peptide (CPP), and as a potent voltage-gated potassium channel (Kv) inhibitor. It exhibits antimicrobial activities, and hind limb paralysis. It also induces potent blockade of neuromuscular transmission in young chicken biventer cervicis preparation and potent myotoxic effect. In vivo, induces myonecrosis, upon intramuscular or subcutaneous injections into mice. This is Crotamine-IV-2 from Crotalus durissus cumanensis (South American rattlesnake).